A 219-amino-acid chain; its full sequence is LHFPL tetraspan subfamily member 5 protein (219 aa).

Over 1-24 the chain is Cytoplasmic; sequence MVKLLPAQEAAKIYHTNYVRNSRA. Residues 25-45 form a helical membrane-spanning segment; that stretch reads VGVMWGTLTICFSVLVMALFI. At 46–98 the chain is on the extracellular side; that stretch reads QPYWIGDSVSTPQAGYFGLFSYCVGNVLSSELICKGGPLDFSSIPSRAFKTAM. A helical transmembrane segment spans residues 99 to 119; it reads FFVALAMFLIIGSIICFSLFF. At 120–128 the chain is on the cytoplasmic side; sequence VCNTATVYK. A helical membrane pass occupies residues 129-149; it reads ICAWMQLAAATGLMIGCLVYP. Residues 150–178 are Extracellular-facing; the sequence is DGWDSSEVRRMCGEQTGKYTLGHCTIRWA. The helical transmembrane segment at 179–199 threads the bilayer; the sequence is FMLAILSIGDALILSFLAFVL. At 200-219 the chain is on the cytoplasmic side; sequence GYRQDKLLPDDYKADGNEEV.

Belongs to the LHFP family. Forms the MET channel composed of TMC (TMC1 or TMC2), TMIE, TOMT, CIB (CIB2 or CIB3), LHPL5 and PCDH15. Interaction with PCDH15 is required for efficient localization to hair bundles.

The protein resides in the cell membrane. Auxiliary subunit of the mechanotransducer (MET) non-specific cation channel complex located at the tips of the shorter stereocilia of cochlear hair cells and that mediates sensory transduction in the auditory system. The MET complex is composed of two dimeric pore-forming ion-conducting transmembrane TMC (TMC1 or TMC2) subunits, and aided by several auxiliary proteins including LHFPL5, TMIE, CIB2/3 and TOMT, and the tip-link PCDH15. Functionally couples PCDH15 to the transduction channel. In Rattus norvegicus (Rat), this protein is LHFPL tetraspan subfamily member 5 protein.